Here is a 744-residue protein sequence, read N- to C-terminus: Adenosylcobalamin-dependent ribonucleoside-triphosphate reductase (744 aa).

An intrachain disulfide couples Cys-120 to Cys-424. The tract at residues 148–159 is effector region-1; it reads SMPFSFLFDQLM. Residues 169 to 318 are effector region-2; that stretch reads VDENINQIPK…ICNLIGKTVV (150 aa). Active-site residues include Cys-413 and Glu-415. Residues 570-631 are adenosylcobalamin-binding-1; it reads FHYSGYLIQR…SDNFASAGTV (62 aa). Residues 690–729 form an adenosylcobalamin-binding-2 region; that stretch reads LKQAPKEPISKEKYEKADNHITGNVEIVFEQTNEDQKGLE.

The protein belongs to the class II ribonucleoside-triphosphate reductase family. Monomer. Adenosylcob(III)alamin is required as a cofactor.

The enzyme catalyses a 2'-deoxyribonucleoside 5'-triphosphate + [thioredoxin]-disulfide + H2O = a ribonucleoside 5'-triphosphate + [thioredoxin]-dithiol. With respect to regulation, allosterically regulated by ATP and dNTP. This chain is Adenosylcobalamin-dependent ribonucleoside-triphosphate reductase (rtpR), found in Lactobacillus gasseri (strain ATCC 33323 / DSM 20243 / BCRC 14619 / CIP 102991 / JCM 1131 / KCTC 3163 / NCIMB 11718 / NCTC 13722 / AM63).